We begin with the raw amino-acid sequence, 410 residues long: WD repeat-containing protein jip5 (410 aa).

6 WD repeats span residues 9-48, 74-113, 119-160, 223-264, 273-316, and 320-357; these read PLSA…EEEH, RHKG…VENK, AKDG…SKVA, VSST…DQDE, GGGE…VVSE, and DETE…IGGE. The interval 41-65 is disordered; it reads PTEEEEEHSDDEQASVSSSRNGKGH. A compositionally biased stretch (acidic residues) spans 43-53; that stretch reads EEEEEHSDDEQ. The segment at 354–410 is disordered; it reads IGGEKRGFGGDSDDSDDDSDDSDHEPKQGDDSRRKRKKQKGKDRGKGPEIMAFADLD. Residues 364-376 are compositionally biased toward acidic residues; it reads DSDDSDDDSDDSD. A compositionally biased stretch (basic and acidic residues) spans 377-386; it reads HEPKQGDDSR.

Belongs to the WD repeat WDR55 family.

The protein resides in the nucleus. It localises to the nucleolus. The sequence is that of WD repeat-containing protein jip5 (jip5) from Emericella nidulans (strain FGSC A4 / ATCC 38163 / CBS 112.46 / NRRL 194 / M139) (Aspergillus nidulans).